Here is a 95-residue protein sequence, read N- to C-terminus: Integration host factor subunit beta (95 aa).

Belongs to the bacterial histone-like protein family. As to quaternary structure, heterodimer of an alpha and a beta chain.

Functionally, this protein is one of the two subunits of integration host factor, a specific DNA-binding protein that functions in genetic recombination as well as in transcriptional and translational control. The polypeptide is Integration host factor subunit beta (Psychromonas ingrahamii (strain DSM 17664 / CCUG 51855 / 37)).